A 123-amino-acid polypeptide reads, in one-letter code: MALLKISVVVPEGEVYTGEVKSVVLPGVEGEFGVLYGHSNMITLLQAGVVEIETENQKEHIAINWGYAEVTKERVDILADGAVFIKKESDDRDDAISRAKKLLEDASSDRLAVSSVLAKIESL.

It belongs to the ATPase epsilon chain family. As to quaternary structure, F-type ATPases have 2 components, CF(1) - the catalytic core - and CF(0) - the membrane proton channel. CF(1) has five subunits: alpha(3), beta(3), gamma(1), delta(1), epsilon(1). CF(0) has three main subunits: a, b and c.

It is found in the cell inner membrane. In terms of biological role, produces ATP from ADP in the presence of a proton gradient across the membrane. This Helicobacter pylori (strain HPAG1) protein is ATP synthase epsilon chain.